Here is a 362-residue protein sequence, read N- to C-terminus: Malate dehydrogenase (362 aa).

Belongs to the LDH2/MDH2 oxidoreductase family. In terms of assembly, homodimer.

It is found in the cytoplasm. It catalyses the reaction (S)-malate + NAD(+) = oxaloacetate + NADH + H(+). The polypeptide is Malate dehydrogenase (mdh) (Pyrococcus abyssi (strain GE5 / Orsay)).